We begin with the raw amino-acid sequence, 311 residues long: tRNA-cytidine(32) 2-sulfurtransferase (311 aa).

The PP-loop motif motif lies at 47–52; the sequence is SGGKDS. 3 residues coordinate [4Fe-4S] cluster: cysteine 122, cysteine 125, and cysteine 213.

It belongs to the TtcA family. As to quaternary structure, homodimer. Mg(2+) serves as cofactor. [4Fe-4S] cluster is required as a cofactor.

Its subcellular location is the cytoplasm. The enzyme catalyses cytidine(32) in tRNA + S-sulfanyl-L-cysteinyl-[cysteine desulfurase] + AH2 + ATP = 2-thiocytidine(32) in tRNA + L-cysteinyl-[cysteine desulfurase] + A + AMP + diphosphate + H(+). It participates in tRNA modification. Functionally, catalyzes the ATP-dependent 2-thiolation of cytidine in position 32 of tRNA, to form 2-thiocytidine (s(2)C32). The sulfur atoms are provided by the cysteine/cysteine desulfurase (IscS) system. In Escherichia coli O127:H6 (strain E2348/69 / EPEC), this protein is tRNA-cytidine(32) 2-sulfurtransferase.